We begin with the raw amino-acid sequence, 32 residues long: Potassium channel toxin alpha-KTx 10.6 (32 aa).

Disulfide bonds link Cys3–Cys22, Cys8–Cys27, and Cys12–Cys29.

As to expression, expressed by the venom gland.

The protein resides in the secreted. In terms of biological role, blocks human voltage-gated potassium (Kv) channels Kv1.2/KCNA2 and Kv1.3/KCNA3. Does not block human Kv1.1 at 100nM concentration. The polypeptide is Potassium channel toxin alpha-KTx 10.6 (Centruroides bonito (Scorpion)).